The primary structure comprises 908 residues: Metabotropic glutamate receptor 8 (908 aa).

The signal sequence occupies residues 1–33 (MVCEGKRSASCPCFFLLTAKFYWILTMMQRTHS). Residues 34–583 (QEYAHSIRVD…IIKLEWHSPW (550 aa)) are Extracellular-facing. A disulfide bridge connects residues Cys64 and Cys106. Asn95 carries N-linked (GlcNAc...) asparagine glycosylation. L-glutamate contacts are provided by residues Ser156, 177–179 (AST), and Tyr227. Intrachain disulfides connect Cys246–Cys534, Cys369–Cys384, Cys424–Cys431, Cys516–Cys535, Cys520–Cys538, Cys541–Cys553, and Cys556–Cys569. Residue Asn298 is glycosylated (N-linked (GlcNAc...) asparagine). Asp309 lines the L-glutamate pocket. An L-glutamate-binding site is contributed by Lys401. N-linked (GlcNAc...) asparagine glycosylation is found at Asn452 and Asn480. Residue Asn565 is glycosylated (N-linked (GlcNAc...) asparagine). A helical membrane pass occupies residues 584 to 608 (AVVPVFVAILGIIATTFVIVTFVRY). The Cytoplasmic portion of the chain corresponds to 609–620 (NDTPIVRASGRE). The helical transmembrane segment at 621–641 (LSYVLLTGIFLCYSITFLMIA) threads the bilayer. Residues 642–647 (APDTII) are Extracellular-facing. The helical transmembrane segment at 648-668 (CSFRRVFLGLGMCFSYAALLT) threads the bilayer. The Cytoplasmic portion of the chain corresponds to 669-695 (KTNRIHRIFEQGKKSVTAPKFISPASQ). The chain crosses the membrane as a helical span at residues 696–716 (LVITFSLISVQLLGVFVWFVV). Residues 717 to 746 (DPPHIIIDYGEQRTLDPEKARGVLKCDISD) lie on the Extracellular side of the membrane. A helical membrane pass occupies residues 747–768 (LSLICSLGYSILLMVTCTVYAI). Over 769-781 (KTRGVPETFNEAK) the chain is Cytoplasmic. A helical transmembrane segment spans residues 782-803 (PIGFTMYTTCIIWLAFIPIFFG). Over 804-818 (TAQSAEKMYIQTTTL) the chain is Extracellular. The chain crosses the membrane as a helical span at residues 819 to 843 (TVSMSLSASVSLGMLYMPKVYIIIF). Residues 844–908 (HPEQNVQKRK…TYISYSNHSI (65 aa)) lie on the Cytoplasmic side of the membrane. A Glycyl lysine isopeptide (Lys-Gly) (interchain with G-Cter in SUMO1) cross-link involves residue Lys882.

The protein belongs to the G-protein coupled receptor 3 family. Interacts with PICK1.

The protein localises to the cell membrane. G-protein coupled receptor for glutamate. Ligand binding causes a conformation change that triggers signaling via guanine nucleotide-binding proteins (G proteins) and modulates the activity of down-stream effectors, such as adenylate cyclase. Signaling inhibits adenylate cyclase activity. In Homo sapiens (Human), this protein is Metabotropic glutamate receptor 8 (GRM8).